A 137-amino-acid polypeptide reads, in one-letter code: Peptide methionine sulfoxide reductase MsrB (137 aa).

Residues 7–129 (PTENIEKLTD…NSASLNFVDD (123 aa)) form the MsrB domain. 4 residues coordinate Zn(2+): Cys-46, Cys-49, Cys-95, and Cys-98. Cys-118 acts as the Nucleophile in catalysis.

It belongs to the MsrB Met sulfoxide reductase family. The cofactor is Zn(2+).

It catalyses the reaction L-methionyl-[protein] + [thioredoxin]-disulfide + H2O = L-methionyl-(R)-S-oxide-[protein] + [thioredoxin]-dithiol. In Yersinia enterocolitica serotype O:8 / biotype 1B (strain NCTC 13174 / 8081), this protein is Peptide methionine sulfoxide reductase MsrB.